A 302-amino-acid polypeptide reads, in one-letter code: Probable 2-(5''-triphosphoribosyl)-3'-dephosphocoenzyme-A synthase 1 (302 aa).

This sequence belongs to the CitG/MdcB family.

The catalysed reaction is 3'-dephospho-CoA + ATP = 2'-(5''-triphospho-alpha-D-ribosyl)-3'-dephospho-CoA + adenine. In Salmonella typhi, this protein is Probable 2-(5''-triphosphoribosyl)-3'-dephosphocoenzyme-A synthase 1.